The primary structure comprises 273 residues: Bifunctional protein FolD (273 aa).

NADP(+) is bound by residues 155–157 (GRS), S182, and I223.

It belongs to the tetrahydrofolate dehydrogenase/cyclohydrolase family. In terms of assembly, homodimer.

The enzyme catalyses (6R)-5,10-methylene-5,6,7,8-tetrahydrofolate + NADP(+) = (6R)-5,10-methenyltetrahydrofolate + NADPH. The catalysed reaction is (6R)-5,10-methenyltetrahydrofolate + H2O = (6R)-10-formyltetrahydrofolate + H(+). The protein operates within one-carbon metabolism; tetrahydrofolate interconversion. In terms of biological role, catalyzes the oxidation of 5,10-methylenetetrahydrofolate to 5,10-methenyltetrahydrofolate and then the hydrolysis of 5,10-methenyltetrahydrofolate to 10-formyltetrahydrofolate. The polypeptide is Bifunctional protein FolD (Pseudothermotoga lettingae (strain ATCC BAA-301 / DSM 14385 / NBRC 107922 / TMO) (Thermotoga lettingae)).